Here is a 265-residue protein sequence, read N- to C-terminus: 3-methyl-2-oxobutanoate hydroxymethyltransferase (265 aa).

Residues Asp-45 and Asp-84 each coordinate Mg(2+). 3-methyl-2-oxobutanoate is bound by residues 45 to 46, Asp-84, and Lys-112; that span reads DS. Glu-114 lines the Mg(2+) pocket. Glu-181 acts as the Proton acceptor in catalysis.

It belongs to the PanB family. As to quaternary structure, homodecamer; pentamer of dimers. It depends on Mg(2+) as a cofactor.

Its subcellular location is the cytoplasm. It carries out the reaction 3-methyl-2-oxobutanoate + (6R)-5,10-methylene-5,6,7,8-tetrahydrofolate + H2O = 2-dehydropantoate + (6S)-5,6,7,8-tetrahydrofolate. It functions in the pathway cofactor biosynthesis; (R)-pantothenate biosynthesis; (R)-pantoate from 3-methyl-2-oxobutanoate: step 1/2. Catalyzes the reversible reaction in which hydroxymethyl group from 5,10-methylenetetrahydrofolate is transferred onto alpha-ketoisovalerate to form ketopantoate. This Pectobacterium carotovorum subsp. carotovorum (strain PC1) protein is 3-methyl-2-oxobutanoate hydroxymethyltransferase.